Here is a 200-residue protein sequence, read N- to C-terminus: GTP cyclohydrolase-2 (200 aa).

50 to 54 is a binding site for GTP; it reads RVHSE. Zn(2+)-binding residues include Cys-55, Cys-66, and Cys-68. Residues Gln-71, 93–95, and Thr-115 contribute to the GTP site; that span reads EGR. Catalysis depends on Asp-127, which acts as the Proton acceptor. Catalysis depends on Arg-129, which acts as the Nucleophile. Residues Thr-150 and Lys-155 each contribute to the GTP site.

This sequence belongs to the GTP cyclohydrolase II family. It depends on Zn(2+) as a cofactor.

The catalysed reaction is GTP + 4 H2O = 2,5-diamino-6-hydroxy-4-(5-phosphoribosylamino)-pyrimidine + formate + 2 phosphate + 3 H(+). It participates in cofactor biosynthesis; riboflavin biosynthesis; 5-amino-6-(D-ribitylamino)uracil from GTP: step 1/4. Its function is as follows. Catalyzes the conversion of GTP to 2,5-diamino-6-ribosylamino-4(3H)-pyrimidinone 5'-phosphate (DARP), formate and pyrophosphate. This chain is GTP cyclohydrolase-2, found in Acinetobacter baumannii (strain AB307-0294).